The primary structure comprises 471 residues: Fructokinase-like 1, chloroplastic (471 aa).

A chloroplast-targeting transit peptide spans 1-38 (MASLLIFPHLHHFDSSLDRREVLVVRHSQASRRFLTPK). The disordered stretch occupies residues 36-85 (TPKASINGSGITNGAAAETTSKPSRKGRKKKQTSTVIEKDNTETDPELNP). The span at 39 to 57 (ASINGSGITNGAAAETTSK) shows a compositional bias: polar residues. Residues 58-67 (PSRKGRKKKQ) show a composition bias toward basic residues.

It belongs to the carbohydrate kinase PfkB family. As to quaternary structure, interacts with CITRX/TRXz. Interacts with PTAC7. Self-interacts. Binds to FLN2. Associates with the plastid-encoded RNA polymerase (PEP) complex.

The protein localises to the plastid. Its subcellular location is the chloroplast. Required for proper chloroplast development, most likely through regulating plastid-encoded polymerase (PEP) dependent chloroplast transcription. Acts as a component of the transcriptionally active plastid chromosome that is required for plastid gene expression. The chain is Fructokinase-like 1, chloroplastic from Arabidopsis thaliana (Mouse-ear cress).